A 776-amino-acid chain; its full sequence is U3 small nucleolar RNA-associated protein 4 (776 aa).

WD repeat units lie at residues 35-40, 132-169, 178-214, 230-266, 271-308, and 417-452; these read RCRFVD, LPLR…VLID, EHDT…RIWS, KVDK…KFWD, TLNQ…FQFS, and VCKL…KVFH.

Interacts with snoRNA U3. Interacts with MPP10. Component of the ribosomal small subunit (SSU) processome composed of at least 40 protein subunits and snoRNA U3. In the absence of snoRNA3, forms a complex with other t-UTPs. This complex can associate with pre-18S ribosomal RNAs.

The protein localises to the nucleus. Its subcellular location is the nucleolus. Involved in nucleolar processing of pre-18S ribosomal RNA. Required for optimal pre-ribosomal RNA transcription by RNA polymerase I together with a subset of U3 proteins required for transcription (t-UTPs). This chain is U3 small nucleolar RNA-associated protein 4 (UTP4), found in Saccharomyces cerevisiae (strain ATCC 204508 / S288c) (Baker's yeast).